The following is a 384-amino-acid chain: Signal peptide peptidase-like 3 (384 aa).

Topologically, residues 1–8 (MAEQTYSW) are lumenal. A helical transmembrane segment spans residues 9 to 29 (AYSLVDSSQVSTFLISILLIV). Residues 30 to 73 (YGSFRSLNMDFENQDKEKDSNSSSGSFNGNSTNNSIQTIDSTQA) lie on the Cytoplasmic side of the membrane. The helical transmembrane segment at 74–94 (LFLPIGASVSLLVMFFFFDSV) threads the bilayer. Position 95 (Gln-95) is a topological domain, lumenal. Residues 96–116 (VVFTICTAVLATIAFAFLLLP) traverse the membrane as a helical segment. Residues 117–138 (MCQYLTRPCSPQNKISFGCCGR) are Cytoplasmic-facing. A helical transmembrane segment spans residues 139 to 159 (FTAAELLSFSLSVMLVLIWVL). Residues 160–164 (TGHWL) lie on the Lumenal side of the membrane. Residues 165–185 (LMDALAMGLCVAMIAFVRLPS) form a helical membrane-spanning segment. The Cytoplasmic segment spans residues 186–190 (LKVSC). A helical membrane pass occupies residues 191–211 (LLLSGLLIYDVFWVFFSAYIF). Asp-200 is a catalytic residue. The Lumenal segment spans residues 212-262 (NSNVMVKVATQPADNPLDVLSRKLHLGPNVGRDVPRLSLPGKLVFPSSTGS). Residues 263 to 283 (HFSMLGIGDIVMPGLLLCFVL) form a helical membrane-spanning segment. Residue Asp-271 is part of the active site. The Cytoplasmic portion of the chain corresponds to 284–311 (RYDNYKKQASGDSCGAPGPANISGRMQK). Residues 312–332 (VSYFHCTLIGYFVGLLTATVA) traverse the membrane as a helical segment. The Lumenal segment spans residues 333 to 339 (SRIHRAA). A helical membrane pass occupies residues 340–360 (QPALLYLVPFTLLPLLTMAYL). Positions 341–343 (PAL) match the PAL motif. Over 361 to 384 (KGDLRRMWSEPFHSKSSSSRFLEV) the chain is Cytoplasmic.

Belongs to the peptidase A22B family. In terms of assembly, monomer. Homodimer. Interacts with STIM1 (via transmembrane region and SOAR/CAD domain); the interaction promotes the binding of STIM1 to ORAI1. Post-translationally, not glycosylated.

It localises to the endoplasmic reticulum membrane. Its subcellular location is the golgi apparatus. It is found in the membrane. Its activity is regulated as follows. Its proteolytic activity is blocked by a signal peptide peptidase (SPP) inhibitor, (ZLL)2-ketone (ZLL) or a gamma-secretase inhibitor, LY411,575. Its function is as follows. Intramembrane-cleaving aspartic protease (I-CLiP) that cleaves type II membrane protein substrates in or close to their luminal transmembrane domain boundaries. Acts like a sheddase by mediating the proteolytic release and secretion of active site-containing ectodomains of glycan-modifiying glycosidase and glycosyltransferase enzymes such as MGAT5, B4GAT1 and B4GALT1. Plays a role in the regulation of cellular glycosylation processes. Required to link T-cell antigen receptor (TCR) and calcineurin-NFAT signaling cascades in lymphocytes by promoting the association of STIM1 and ORAI1 during store-operated calcium entry (SOCE) in a protease-independent manner. The polypeptide is Signal peptide peptidase-like 3 (Mus musculus (Mouse)).